The sequence spans 57 residues: Conotoxin Cal6.39 (57 aa).

The N-terminal stretch at 1-18 (MSGTTVLLLTCLFLVTMA) is a signal peptide. 3 cysteine pairs are disulfide-bonded: cysteine 22/cysteine 36, cysteine 29/cysteine 46, and cysteine 35/cysteine 52.

Expressed by the venom duct.

It localises to the secreted. Probable neurotoxin. The sequence is that of Conotoxin Cal6.39 from Californiconus californicus (California cone).